The chain runs to 270 residues: Acyl-[acyl-carrier-protein]--UDP-N-acetylglucosamine O-acyltransferase (270 aa).

This sequence belongs to the transferase hexapeptide repeat family. LpxA subfamily. In terms of assembly, homotrimer.

It is found in the cytoplasm. It catalyses the reaction a (3R)-hydroxyacyl-[ACP] + UDP-N-acetyl-alpha-D-glucosamine = a UDP-3-O-[(3R)-3-hydroxyacyl]-N-acetyl-alpha-D-glucosamine + holo-[ACP]. It functions in the pathway glycolipid biosynthesis; lipid IV(A) biosynthesis; lipid IV(A) from (3R)-3-hydroxytetradecanoyl-[acyl-carrier-protein] and UDP-N-acetyl-alpha-D-glucosamine: step 1/6. In terms of biological role, involved in the biosynthesis of lipid A, a phosphorylated glycolipid that anchors the lipopolysaccharide to the outer membrane of the cell. The protein is Acyl-[acyl-carrier-protein]--UDP-N-acetylglucosamine O-acyltransferase of Sinorhizobium medicae (strain WSM419) (Ensifer medicae).